A 306-amino-acid polypeptide reads, in one-letter code: Ornithine carbamoyltransferase (306 aa).

Carbamoyl phosphate-binding positions include 53–56, Gln-80, Arg-104, and 131–134; these read STRT and HPCQ. Residues Asn-162, Asp-219, and 223–224 each bind L-ornithine; that span reads SM. Carbamoyl phosphate is bound by residues 259–260 and Arg-287; that span reads CL.

This sequence belongs to the aspartate/ornithine carbamoyltransferase superfamily. OTCase family.

Its subcellular location is the cytoplasm. The catalysed reaction is carbamoyl phosphate + L-ornithine = L-citrulline + phosphate + H(+). The protein operates within amino-acid degradation; L-arginine degradation via ADI pathway; carbamoyl phosphate from L-arginine: step 2/2. Its function is as follows. Reversibly catalyzes the transfer of the carbamoyl group from carbamoyl phosphate (CP) to the N(epsilon) atom of ornithine (ORN) to produce L-citrulline. The protein is Ornithine carbamoyltransferase of Acinetobacter baumannii (strain AYE).